Consider the following 336-residue polypeptide: Retinol dehydrogenase 10-B (336 aa).

The helical; Signal-anchor transmembrane segment at 7–27 threads the bilayer; it reads LFVVTFKIIWSFVLAGAKWFI. 40-64 provides a ligand contact to NADP(+); it reads VITGAGSGLGRLFALEFARRRATLV. Substrate is bound at residue serine 192. Tyrosine 205 functions as the Proton acceptor in the catalytic mechanism.

It belongs to the short-chain dehydrogenases/reductases (SDR) family.

Its subcellular location is the microsome membrane. The protein resides in the endoplasmic reticulum membrane. The enzyme catalyses all-trans-retinol + NADP(+) = all-trans-retinal + NADPH + H(+). The protein operates within cofactor metabolism; retinol metabolism. In terms of biological role, retinol dehydrogenase with a clear preference for NADP. Converts all-trans-retinol to all-trans-retinal. Has no detectable activity towards 11-cis-retinol, 9-cis-retinol and 13-cis-retinol. This Danio rerio (Zebrafish) protein is Retinol dehydrogenase 10-B (rdh10b).